Reading from the N-terminus, the 411-residue chain is MIAPSPKSSEEEGQKDEEVLQGEQGDFNDNDTEPENLGHRPLLMDSEDEEEEEKRSSDSDYEQAKAKYSDMSPVYRDKSGSGPTQDINTILLTSAQLSSDVGVETPKQEFDIFGAVPFFAVCAQQPQQEKNEKSLPQHRFPATGLQQEEFDVFTKAPFSKKVNVQECHAVGPETHPKSIDIFDFTPFQPFLTSTSKSESNEDLFGLVPFEEIMGSQQQKVKQRSLQKLSSRQRRTKQDMSKSNGKRHHGTPTSKKKTLKPTYRTPERARRHKKVGRRVSQTSNEFVTISDSKENIGAAVTDGNDRGNVLQLEESLLDPFGAKPFHPPDLSWHPLHQGLNDIRADHNTVLPKQPRQNSLHGSFHSADVLTMDDFGAMPFTELVVQSITLQQSQQSQPVELDPFGAAPFPSKQ.

Disordered stretches follow at residues Met-1–Ile-87, Ser-215–Gln-280, and Gln-392–Gln-411. Composition is skewed to basic and acidic residues over residues Ser-8–Glu-18 and Glu-53–Tyr-68. Positions Glu-47 to Met-71 form a coiled coil. Composition is skewed to basic residues over residues Val-220–Arg-234 and Asn-243–Leu-258.

The polypeptide is Putative BMP-2-inducible kinase-like protein (BMP2KL) (Homo sapiens (Human)).